Consider the following 448-residue polypeptide: Trigger factor (448 aa).

The 87-residue stretch at 167–253 (GSIVRVDFVE…LKDIKRRDIP (87 aa)) folds into the PPIase FKBP-type domain.

It belongs to the FKBP-type PPIase family. Tig subfamily.

It is found in the cytoplasm. It catalyses the reaction [protein]-peptidylproline (omega=180) = [protein]-peptidylproline (omega=0). Functionally, involved in protein export. Acts as a chaperone by maintaining the newly synthesized protein in an open conformation. Functions as a peptidyl-prolyl cis-trans isomerase. In Borrelia turicatae (strain 91E135), this protein is Trigger factor.